A 944-amino-acid chain; its full sequence is Calcium-transporting ATPase type 2C member 2 (944 aa).

The Cytoplasmic portion of the chain corresponds to 1–104; it reads MGRRLKFLQK…DNAEPVWKKY (104 aa). Residues 69–93 form an interaction with ORAI1 region; it reads VDLDSGLSEFAVAQRRLVHGWNEFV. The helical transmembrane segment at 105-125 threads the bilayer; it reads LDQFRNPLILLLLGSSVVSVL. Topologically, residues 126–127 are extracellular; sequence TK. A helical membrane pass occupies residues 128-148; the sequence is EYEDAVSIALAVLIVVTVGFI. Residues 149 to 229 lie on the Cytoplasmic side of the membrane; it reads QEYRSEKSLE…EVEPCGKTDS (81 aa). A helical membrane pass occupies residues 230–250; the sequence is PLADGGDLSTLSNVVFMGTLV. Residues 251 to 291 are Extracellular-facing; that stretch reads QCGKGQGVVIGTGEQSQFGEVFKMMRAEETPKTPLQKSMDK. Threonine 262 is subject to Phosphothreonine. Phosphoserine is present on serine 266. The chain crosses the membrane as a helical span at residues 292 to 312; that stretch reads LGKQLTIFSFGIIGLLMLVGW. Over 313 to 329 the chain is Cytoplasmic; that stretch reads VQGKPFLSMFTVGVSLA. Valine 330, alanine 331, isoleucine 333, and glutamate 335 together coordinate Ca(2+). Residues 330–350 traverse the membrane as a helical segment; it reads VAAIPEGLPIVVMVTLVLGVL. The Extracellular segment spans residues 351-748; it reads RMAKKRVIVK…IAALSLITLS (398 aa). Aspartate 377 serves as the catalytic 4-aspartylphosphate intermediate. The Mg(2+) site is built by aspartate 672 and aspartate 676. A helical transmembrane segment spans residues 749 to 769; it reads TVCNLPSPLNAMQILWVNIIM. Asparagine 766 and aspartate 770 together coordinate Ca(2+). Residues 770 to 802 lie on the Cytoplasmic side of the membrane; sequence DGPPAQSLGVEPVDRDALRRPPRSVGDTILNRA. A helical membrane pass occupies residues 803 to 823; sequence LILRVLMSAAVIIGGTLFIFW. Topologically, residues 824–835 are extracellular; that stretch reads REIPANGTSTPR. Residues 836–853 traverse the membrane as a helical segment; the sequence is TTTMAFTCFVFFDLFNAL. The Cytoplasmic segment spans residues 854–872; that stretch reads SCRSQTKLIFEIGFFRNRM. Residues 873–893 form a helical membrane-spanning segment; the sequence is FLYSVLGSLLGQLAVIYAPPL. Topologically, residues 894-903 are extracellular; the sequence is QKVFQTENLS. A helical membrane pass occupies residues 904–924; sequence ALDLLLLTGLASSVFILSELL. Over 925–944 the chain is Cytoplasmic; that stretch reads KLWEKFLSRARPTQMLPEAV.

It belongs to the cation transport ATPase (P-type) (TC 3.A.3) family. Type IIA subfamily. In terms of assembly, interacts (via N-terminus) with ORAI1 (via N- and C-termini); this interaction regulates Ca(2+) influx at the plasma membrane. Expressed in hippocampal neurons (at protein level). Expressed in lactating mammary epithelium (at protein level).

It is found in the golgi apparatus. The protein resides in the trans-Golgi network membrane. The protein localises to the cell membrane. It localises to the basolateral cell membrane. It catalyses the reaction Ca(2+)(in) + ATP + H2O = Ca(2+)(out) + ADP + phosphate + H(+). It carries out the reaction Mn(2+)(in) + ATP + H2O = Mn(2+)(out) + ADP + phosphate + H(+). Its function is as follows. ATP-driven pump that supplies the Golgi apparatus with Ca(2+) and Mn(2+) ions, both essential cofactors for processing and trafficking of newly synthesized proteins in the secretory pathway. Within a catalytic cycle, acquires Ca(2+) or Mn(2+) ions on the cytoplasmic side of the membrane and delivers them to the lumenal side. The transfer of ions across the membrane is coupled to ATP hydrolysis and is associated with a transient phosphorylation that shifts the pump conformation from inward-facing to outward-facing state. Induces Ca(2+) influx independently of its ATP-driven pump function. At the basolateral membrane of mammary epithelial cells, interacts with Ca(2+) channel ORAI1 and mediates Ca(2+) entry independently of the Ca(2+) content of endoplasmic reticulum or Golgi stores. May facilitate transepithelial transport of large quantities of Ca(2+) for milk secretion via activation of Ca(2+) influx channels at the plasma membrane and active Ca(2+) transport at the Golgi apparatus. In Mus musculus (Mouse), this protein is Calcium-transporting ATPase type 2C member 2.